A 527-amino-acid chain; its full sequence is Protein Lilipod (527 aa).

The Extracellular portion of the chain corresponds to 1 to 22 (MDEEEEEEVTDLKLQLFHNTVR). Residues 23 to 43 (EHIIFLLLIILLYSSSYVVVS) traverse the membrane as a helical segment. At 44–65 (RFRRRDRDDLYSNDEDEVLVYR) the chain is on the cytoplasmic side. A helical transmembrane segment spans residues 66–86 (ISFWLCTFTLAVAEGAAMLLP). Topologically, residues 87–117 (VSIASNEVLLLYPNSYYVKWLNSSLIQGLWN) are extracellular. The helical transmembrane segment at 118–138 (HVFLFSNLSLFIFLPFVYLFS) threads the bilayer. Residues 139 to 160 (ESTGFVGNKKGILPRVYETFTV) are Cytoplasmic-facing. A helical membrane pass occupies residues 161–181 (FMLMAIIVLVLTAVLSAVFGI). Residues 182-194 (EKLQFFWFLNLGS) are Extracellular-facing. Residues 195–215 (VHLPFLYSCVSFLGVMLMLIC) form a helical membrane-spanning segment. Residues 216 to 341 (TPYGFVRLFG…LRTSSTFQRT (126 aa)) are Cytoplasmic-facing. A helical transmembrane segment spans residues 342 to 362 (FVYPLAMLLLLFCTAVTILLV). Residues 363–395 (VQNTLELLIGIKALPLSTRQFALGISSLSKLGP) are Extracellular-facing. A helical transmembrane segment spans residues 396 to 416 (FGAGLEVCLIFYLGATSVVGF). Topologically, residues 417–433 (YSMPFMRKVCPKRRQTS) are cytoplasmic. Residues 434–454 (LPQLMLNCGFMLVLSSALPLL) traverse the membrane as a helical segment. Over 455 to 468 (SRIIGITNFDLLGD) the chain is Extracellular. A helical transmembrane segment spans residues 469 to 489 (FGAIEWLGNFQIVLLYNLVFG). Over 490-527 (TTTALCLANKFTATVRRELRARLVENYVLFTNYISFIN) the chain is Cytoplasmic.

It belongs to the LIMR family. In terms of tissue distribution, in the ovary, detected in germline stem cells and their progeny. Also detected in the somatic follicular epithelium.

It is found in the cell membrane. Functionally, required during oogenesis to promote self-renewal of germline stem cells, probably by enhancing BMP signaling activity. This chain is Protein Lilipod, found in Drosophila melanogaster (Fruit fly).